The following is a 360-amino-acid chain: Ribosomal RNA small subunit methyltransferase C (360 aa).

The protein belongs to the methyltransferase superfamily. RsmC family. Monomer.

It localises to the cytoplasm. The enzyme catalyses guanosine(1207) in 16S rRNA + S-adenosyl-L-methionine = N(2)-methylguanosine(1207) in 16S rRNA + S-adenosyl-L-homocysteine + H(+). Specifically methylates the guanine in position 1207 of 16S rRNA in the 30S particle. This chain is Ribosomal RNA small subunit methyltransferase C, found in Alteromonas mediterranea (strain DSM 17117 / CIP 110805 / LMG 28347 / Deep ecotype).